Here is a 585-residue protein sequence, read N- to C-terminus: MQSSYCPSPYRYTRRVTREVMVGNVGVGGSNPIRIQSMLTSDTRDTDACVKEALELAEAGCEIIRLTAQTKAYAANLENIARELRAAGCHVPLVADIHFKPDAAMEAAKWVEKIRINPGNFVDKKKFEVREYSDAEYREELDRLKEEFTPLVLFCREHGRAMRIGSNHGSLSDRILNRFGDTPEGMVESAIEFAQIARDLDYHSLVFSMKASNVKVMVAAYRLLVERMNALGPDWNYPIHLGVTEAGGGEDGRIKSAVGIGSLLTDGIGDTLRVSLTEDAVREVPVAYRLSNPFQPSERSDDPVSFPEPELSYDPLKFSKRQGGLAMYYGVRLGWEQPVRVAVPDAGFYALQTEREAMGDMMPELSLGQLDAIEVDPRCDADLEPLKELAEPSIVTVKNGLAMEPVYAFRLLAARIEDRHLILLKDTLVPGSVSGEDVPLTAARNIGSLLCDGIGDAVLIQGESDPRLASFLGFNILQATGTRLTRADYVSCPSCGRTLYNIQEATARIRKATEHLKGVKIAVMGCIVNGPGEMADADFGYVGGAPNKINLYVKHTPVKFNIPQEEAVERLVDLIKEYGRWVDPK.

The [4Fe-4S] cluster site is built by Cys492, Cys495, Cys526, and Glu533.

Belongs to the IspG family. [4Fe-4S] cluster is required as a cofactor.

The enzyme catalyses (2E)-4-hydroxy-3-methylbut-2-enyl diphosphate + oxidized [flavodoxin] + H2O + 2 H(+) = 2-C-methyl-D-erythritol 2,4-cyclic diphosphate + reduced [flavodoxin]. It functions in the pathway isoprenoid biosynthesis; isopentenyl diphosphate biosynthesis via DXP pathway; isopentenyl diphosphate from 1-deoxy-D-xylulose 5-phosphate: step 5/6. Converts 2C-methyl-D-erythritol 2,4-cyclodiphosphate (ME-2,4cPP) into 1-hydroxy-2-methyl-2-(E)-butenyl 4-diphosphate. This Akkermansia muciniphila (strain ATCC BAA-835 / DSM 22959 / JCM 33894 / BCRC 81048 / CCUG 64013 / CIP 107961 / Muc) protein is 4-hydroxy-3-methylbut-2-en-1-yl diphosphate synthase (flavodoxin).